The chain runs to 144 residues: MNFKYIVAVSFLIASAYARSVQNDEQSLSQRDVLEEESLREIRGIGGKILSGLKTALKGAAKELASTYLHRKRTAEEHEVMKRLEAVMRDLDSLDYPEEASERETRGFNQDEIANLFTKKEKRILGPVLGLVSNALGGLIKKIG.

The first 18 residues, 1 to 18 (MNFKYIVAVSFLIASAYA), serve as a signal peptide directing secretion. Propeptides lie at residues 19-43 (RSVQ…REIR) and 74-123 (TAEE…KEKR). Isoleucine 143 carries the isoleucine amide modification.

Belongs to the bombinin family. In terms of tissue distribution, expressed by the skin glands.

It localises to the secreted. In terms of biological role, maximin-3 shows antibacterial activity against both Gram-positive and Gram-negative bacteria. It also shows antimicrobial activity against the fungus C.albicans, but not against A.flavus nor P.uticale. It has little hemolytic activity. It possess a significant cytotoxicity against tumor cell lines. It possess a significant anti-HIV activity. It shows high spermicidal activity. Functionally, maximin-H9 shows antimicrobial activity against bacteria and against the fungus C.albicans. Shows strong hemolytic activity. The polypeptide is Maximins 3/H9 type 2 (Bombina maxima (Giant fire-bellied toad)).